Consider the following 267-residue polypeptide: Cytokinesis defective protein 7 (267 aa).

The tract at residues 244 to 267 is disordered; the sequence is RNQADQSILPPSGDQQHHRSELHA. The span at 258–267 shows a compositional bias: basic and acidic residues; that stretch reads QQHHRSELHA.

The chain is Cytokinesis defective protein 7 from Caenorhabditis elegans.